Here is a 156-residue protein sequence, read N- to C-terminus: NADH-ubiquinone oxidoreductase chain 6 (156 aa).

The next 5 membrane-spanning stretches (helical) occupy residues 1–21, 24–44, 49–69, 77–97, and 121–141; these read MILT…YLAS, IVLG…FASF, FAFL…AYFL, ISNF…SALT, and STAP…VIVV.

It belongs to the complex I subunit 6 family.

It is found in the mitochondrion membrane. It carries out the reaction a ubiquinone + NADH + 5 H(+)(in) = a ubiquinol + NAD(+) + 4 H(+)(out). Its function is as follows. Core subunit of the mitochondrial membrane respiratory chain NADH dehydrogenase (Complex I) that is believed to belong to the minimal assembly required for catalysis. Complex I functions in the transfer of electrons from NADH to the respiratory chain. The immediate electron acceptor for the enzyme is believed to be ubiquinone. This chain is NADH-ubiquinone oxidoreductase chain 6 (ND6), found in Lumbricus terrestris (Common earthworm).